The primary structure comprises 81 residues: Photosystem I iron-sulfur center (81 aa).

4Fe-4S ferredoxin-type domains are found at residues 2-31 and 37-68; these read SHTV…MVPW and GQIA…VRVY. The [4Fe-4S] cluster site is built by cysteine 11, cysteine 14, cysteine 17, cysteine 21, cysteine 48, cysteine 51, cysteine 54, and cysteine 58.

In terms of assembly, the eukaryotic PSI reaction center is composed of at least 11 subunits. It depends on [4Fe-4S] cluster as a cofactor.

The protein localises to the plastid. It localises to the chloroplast thylakoid membrane. It carries out the reaction reduced [plastocyanin] + hnu + oxidized [2Fe-2S]-[ferredoxin] = oxidized [plastocyanin] + reduced [2Fe-2S]-[ferredoxin]. Apoprotein for the two 4Fe-4S centers FA and FB of photosystem I (PSI); essential for photochemical activity. FB is the terminal electron acceptor of PSI, donating electrons to ferredoxin. The C-terminus interacts with PsaA/B/D and helps assemble the protein into the PSI complex. Required for binding of PsaD and PsaE to PSI. PSI is a plastocyanin/cytochrome c6-ferredoxin oxidoreductase, converting photonic excitation into a charge separation, which transfers an electron from the donor P700 chlorophyll pair to the spectroscopically characterized acceptors A0, A1, FX, FA and FB in turn. The sequence is that of Photosystem I iron-sulfur center from Thalassiosira pseudonana (Marine diatom).